The chain runs to 468 residues: Aldehyde dehydrogenase family 3 member B1 (468 aa).

N-acetylmethionine is present on Met-1. An NAD(+)-binding site is contributed by 188-193 (GSPRVG). Residues Glu-210 and Cys-244 contribute to the active site. A lipid anchor (S-palmitoyl cysteine) is attached at Cys-463. A Cysteine methyl ester modification is found at Cys-465. A lipid anchor (S-geranylgeranyl cysteine) is attached at Cys-465. The propeptide at 466-468 (TLL) is removed in mature form.

The protein belongs to the aldehyde dehydrogenase family. Dually lipidated in the C-terminus; prenylation occurs prior to, and is a prerequisite for palmitoylation. It is also required for activity towards long-chain substrates. In terms of tissue distribution, highest expression in kidney and lung.

Its subcellular location is the cell membrane. It catalyses the reaction an aldehyde + NADP(+) + H2O = a carboxylate + NADPH + 2 H(+). It carries out the reaction an aldehyde + NAD(+) + H2O = a carboxylate + NADH + 2 H(+). The enzyme catalyses a long-chain fatty aldehyde + NAD(+) + H2O = a long-chain fatty acid + NADH + 2 H(+). The catalysed reaction is a medium-chain fatty aldehyde + NAD(+) + H2O = a medium-chain fatty acid + NADH + 2 H(+). It catalyses the reaction octanal + NAD(+) + H2O = octanoate + NADH + 2 H(+). It carries out the reaction nonanal + NAD(+) + H2O = nonanoate + NADH + 2 H(+). The enzyme catalyses hexadecanoate + NADH + 2 H(+) = hexadecanal + NAD(+) + H2O. The catalysed reaction is (2E)-octenal + NAD(+) + H2O = (2E)-octenoate + NADH + 2 H(+). It catalyses the reaction (E)-non-2-enal + NAD(+) + H2O = (E)-non-2-enoate + NADH + 2 H(+). It carries out the reaction (E)-4-hydroxynon-2-enal + NAD(+) + H2O = (E)-4-hydroxynon-2-enoate + NADH + 2 H(+). The enzyme catalyses (2E)-hexadecenal + NAD(+) + H2O = (E)-hexadec-2-enoate + NADH + 2 H(+). The catalysed reaction is benzaldehyde + NAD(+) + H2O = benzoate + NADH + 2 H(+). It catalyses the reaction a medium-chain fatty aldehyde + NADP(+) + H2O = a medium-chain fatty acid + NADPH + 2 H(+). It carries out the reaction hexanal + NADP(+) + H2O = hexanoate + NADPH + 2 H(+). The enzyme catalyses octanal + NADP(+) + H2O = octanoate + NADPH + 2 H(+). The catalysed reaction is nonanal + NADP(+) + H2O = nonanoate + NADPH + 2 H(+). It catalyses the reaction (2E)-octenal + NADP(+) + H2O = (2E)-octenoate + NADPH + 2 H(+). It carries out the reaction (E)-non-2-enal + NADP(+) + H2O = (E)-non-2-enoate + NADPH + 2 H(+). The enzyme catalyses (E)-4-hydroxynon-2-enal + NADP(+) + H2O = (E)-4-hydroxynon-2-enoate + NADPH + 2 H(+). The catalysed reaction is benzaldehyde + NADP(+) + H2O = benzoate + NADPH + 2 H(+). The protein operates within alcohol metabolism; ethanol degradation; acetate from ethanol: step 2/2. In terms of biological role, oxidizes medium and long chain saturated and unsaturated fatty aldehydes generated in the plasma membrane into non-toxic fatty acids. May have a protective role against the cytotoxicity induced by lipid peroxidation. Short-chain fatty aldehydes are not good substrates. Can use both NADP(+) and NAD(+) as electron acceptor in vitro, however in vivo preference will depend on their tissue levels. Low activity towards acetaldehyde and 3,4-dihydroxyphenylacetaldehyde. Able to metabolize aromatic aldehydes such as benzaldehyde to their acid form. This chain is Aldehyde dehydrogenase family 3 member B1 (ALDH3B1), found in Homo sapiens (Human).